The chain runs to 721 residues: Dipeptidyl-peptidase 5 (721 aa).

A signal peptide spans 1–18; sequence MGAFRWLSIAAAASTALA. Residues N75, N94, N151, and N254 are each glycosylated (N-linked (GlcNAc...) asparagine). The disordered stretch occupies residues 271 to 297; it reads ARPINGPDSPGTPKGIKGDSSSPVFSP. N-linked (GlcNAc...) asparagine glycosylation is found at N380 and N450. S560 serves as the catalytic Charge relay system. N607 carries N-linked (GlcNAc...) asparagine glycosylation. Catalysis depends on charge relay system residues D643 and H675.

The protein belongs to the peptidase S9C family. Post-translationally, N-glycosylated. In terms of tissue distribution, expressed in mycelia and conidia.

The protein localises to the secreted. Functionally, may be involved in metabolism of dipeptides or may affect host defense mechanisms. Has a substrate specificity limited to the hydrolysis of X-Ala, His-Ser, and Ser-Tyr dipeptides at a neutral pH optimum. In Aspergillus fumigatus (strain ATCC MYA-4609 / CBS 101355 / FGSC A1100 / Af293) (Neosartorya fumigata), this protein is Dipeptidyl-peptidase 5.